Consider the following 242-residue polypeptide: Endoplasmic reticulum membrane protein complex subunit 7 (242 aa).

Positions 1–23 (MAAALWGFFPVLLLLLLSGDVQS) are cleaved as a signal peptide. Residues 24-159 (SEVPGAAAEG…IKRESWGWTD (136 aa)) lie on the Lumenal side of the membrane. A helical transmembrane segment spans residues 160-180 (FLMNPMVMMMVLPLLIFVLLP). Over 181 to 242 (KVVNTSDPDM…TGKSGAGKRR (62 aa)) the chain is Cytoplasmic. Residues 217 to 242 (LFSSKSSGKSSSGSSKTGKSGAGKRR) form a disordered region. Positions 219-235 (SSKSSGKSSSGSSKTGK) are enriched in low complexity.

The protein belongs to the EMC7 family. Component of the ER membrane protein complex (EMC).

The protein localises to the endoplasmic reticulum membrane. In terms of biological role, part of the endoplasmic reticulum membrane protein complex (EMC) that enables the energy-independent insertion into endoplasmic reticulum membranes of newly synthesized membrane proteins. Preferentially accommodates proteins with transmembrane domains that are weakly hydrophobic or contain destabilizing features such as charged and aromatic residues. Involved in the cotranslational insertion of multi-pass membrane proteins in which stop-transfer membrane-anchor sequences become ER membrane spanning helices. It is also required for the post-translational insertion of tail-anchored/TA proteins in endoplasmic reticulum membranes. By mediating the proper cotranslational insertion of N-terminal transmembrane domains in an N-exo topology, with translocated N-terminus in the lumen of the ER, controls the topology of multi-pass membrane proteins like the G protein-coupled receptors. By regulating the insertion of various proteins in membranes, it is indirectly involved in many cellular processes. This is Endoplasmic reticulum membrane protein complex subunit 7 (EMC7) from Homo sapiens (Human).